Consider the following 270-residue polypeptide: 3-methyl-2-oxobutanoate hydroxymethyltransferase (270 aa).

Residues aspartate 48 and aspartate 87 each contribute to the Mg(2+) site. 3-methyl-2-oxobutanoate is bound by residues 48–49 (DS), aspartate 87, and lysine 117. Glutamate 119 is a binding site for Mg(2+). Glutamate 186 acts as the Proton acceptor in catalysis.

This sequence belongs to the PanB family. Homodecamer; pentamer of dimers. It depends on Mg(2+) as a cofactor.

The protein resides in the cytoplasm. The enzyme catalyses 3-methyl-2-oxobutanoate + (6R)-5,10-methylene-5,6,7,8-tetrahydrofolate + H2O = 2-dehydropantoate + (6S)-5,6,7,8-tetrahydrofolate. It functions in the pathway cofactor biosynthesis; (R)-pantothenate biosynthesis; (R)-pantoate from 3-methyl-2-oxobutanoate: step 1/2. In terms of biological role, catalyzes the reversible reaction in which hydroxymethyl group from 5,10-methylenetetrahydrofolate is transferred onto alpha-ketoisovalerate to form ketopantoate. The polypeptide is 3-methyl-2-oxobutanoate hydroxymethyltransferase (Synechococcus sp. (strain RCC307)).